The sequence spans 811 residues: MERGKMAEAESLETAAEHERILREIESTDTACIGPTLRSVYDGEEHGRFMEKLETRIRNHDREIEKMCNFHYQGFVDSITELLKVRGEAQKLKNQVTDTNRKLQHEGKELVIAMEELKQCRLQQRNISATVDKLMLCLPVLEMYSKLRDQMKTKRHYPALKTLEHLEHTYLPQVSHYRFCKVMVDNIPKLREEIKDVSMSDLKDFLESIRKHSDKIGETAMKQAQQQRNLDNIVLQQPRIGSKRKSKKDAYIIFDTEIESTSPKSEQDSGILDVEDEEDDEEVPGAQDLVDFSPVYRCLHIYSVLGARETFENYYRKQRRKQARLVLQPPSNMHETLDGYRKYFNQIVGFFVVEDHILHTTQGLVNRAYIDELWEMALSKTIAALRTHSSYCSDPNLVLDLKNLIVLFADTLQVYGFPVNQLFDMLLEIRDQYSETLLKKWAGIFRNILDSDNYSPIPVTSEEMYKKVVGQFPFQDIELEKQPFPKKFPFSEFVPKVYNQIKEFIYACLKFSEDLHLSSTEVDDMIRKSTNLLLTRTLSNSLQNVIKRKNIGLTELVQIIINTTHLEKSCKYLEEFITNITNVLPETVHTTKLYGTTTFKDARHAAEEEIYTNLNQKIDQFLQLADYDWMTGDLGNKASDYLVDLIAFLRSTFAVFTHLPGKVAQTACMSACKHLATSLMQLLLEAEVRQLTLGALQQFNLDVRECEQFARSGPVPGFQEDTLQLAFIDLRQLLDLFIQWDWSTYLADYGQPNCKYLRVNPVTALTLLEKMKDTSRKNNMFAQFRKNERDKQKLIDTVAKQLRGLISSHHS.

Positions 50-119 (MEKLETRIRN…LVIAMEELKQ (70 aa)) form a coiled coil. The interval 260–280 (STSPKSEQDSGILDVEDEEDD) is disordered.

This sequence belongs to the SEC15 family. As to quaternary structure, the exocyst complex is composed of SEC3, SEC5, SEC6, SEC8, SEC10, SEC15, EXO70 and EXO84.

Its function is as follows. Component of the exocyst complex involved in the docking of exocytic vesicles with fusion sites on the plasma membrane. The chain is Exocyst complex component 6B (EXOC6B) from Homo sapiens (Human).